Here is a 504-residue protein sequence, read N- to C-terminus: Paired zinc finger protein 1 (504 aa).

2 C2H2-type zinc fingers span residues 12–35 (LLCGICGKYFSDDESLREHRRQRH) and 39–62 (HMCLLCNRRIPENETLREHMKNKH). The C2H2-type 3; degenerate zinc finger occupies 68-91 (FICVCCNWSFGTEIYLKCHEECMK). Disordered stretches follow at residues 115 to 136 (ALNTDPQNGSDDVPHSSPSPVP) and 154 to 173 (IESADRSSASTSTPRTLVSG). The span at 159–172 (RSSASTSTPRTLVS) shows a compositional bias: polar residues. 2 consecutive C2H2-type zinc fingers follow at residues 179–202 (IPCGFCGKDFFHEGSLREHRRRFH) and 206–229 (HTCLLCNRQIPENETVRDHMKSQH). The C2H2-type 6; degenerate zinc-finger motif lies at 235-258 (YNCLCCNWTFLNQVHLISHKTCLK). The C2H2-type 7 zinc-finger motif lies at 309 to 332 (LSCKSCGKFFYSERSLSKHHRQIH). Residues 365-389 (FNCRCCNWSFATRRCLMSHVECLKK) form a C2H2-type 8; degenerate zinc finger.

In terms of tissue distribution, expressed in proximal gonad.

Functionally, possible transcriptional regulator. Involved in promoting segregation of chromosomes during meiosis, perhaps acting downstream of the let-60 RAS / mpk-1 MAPK signaling pathway. The polypeptide is Paired zinc finger protein 1 (Caenorhabditis elegans).